A 523-amino-acid chain; its full sequence is Pituitary adenylate cyclase-activating polypeptide type I receptor (523 aa).

The first 19 residues, 1–19, serve as a signal peptide directing secretion; sequence MARVLQLSLTALLLPVAIA. At 20–151 the chain is on the extracellular side; sequence MHSDCIFKKE…SGDQDYYYLS (132 aa). 3 disulfide bridges follow: cysteine 33–cysteine 62, cysteine 53–cysteine 117, and cysteine 76–cysteine 133. Residues asparagine 47, asparagine 59, and asparagine 116 are each glycosylated (N-linked (GlcNAc...) asparagine). The tract at residues 124-138 is important for ADCYAP1/PACAP ligand binding and specificity; that stretch reads EPFPHYFDACGFDDY. The interval 124 to 138 is important for ligand binding and specificity; it reads EPFPHYFDACGFDDY. Residues 152 to 176 traverse the membrane as a helical segment; the sequence is VKALYTVGYSTSLATLTTAMVILCR. Residues 177 to 186 lie on the Cytoplasmic side of the membrane; sequence FRKLHCTRNF. The helical transmembrane segment at 187-207 threads the bilayer; it reads IHMNLFVSFMLRAISVFIKDW. Over 208-222 the chain is Extracellular; the sequence is ILYAEQDSSHCFVST. Residues 223 to 248 traverse the membrane as a helical segment; the sequence is VECKAVMVFFHYCVVSNYFWLFIEGL. Cysteine 225 and cysteine 295 form a disulfide bridge. The Cytoplasmic segment spans residues 249–266; the sequence is YLFTLLVETFFPERRYFY. A helical transmembrane segment spans residues 267 to 289; sequence WYTIIGWGTPTVCVTVWAVLRLY. Residues 290–301 are Extracellular-facing; it reads FDDAGCWDMNDS. The helical transmembrane segment at 302–328 threads the bilayer; sequence TALWWVIKGPVVGSIMVNFVLFIGIII. Residues 329–346 are Cytoplasmic-facing; sequence ILVQKLQSPDMGGNESSI. A helical membrane pass occupies residues 347-429; sequence YLTNLRLRVP…HYTVFAFSPE (83 aa). Topologically, residues 430-434 are extracellular; the sequence is NVSKR. A helical membrane pass occupies residues 435 to 458; the sequence is ERLVFELGLGSFQGFVVAVLYCFL. The Cytoplasmic portion of the chain corresponds to 459 to 523; the sequence is NGEVQAEIKR…SSLPADNLAT (65 aa). Phosphoserine occurs at positions 489 and 502.

It belongs to the G-protein coupled receptor 2 family. As to quaternary structure, interacts with maxadilan, a vasodilator peptide from Lutzomyia longipalpis saliva; the interaction results in ADCYAP1R1 activation. As to expression, hypothalamus, anterior pituitary, adrenal medulla, testicular germ cells.

The protein resides in the cell membrane. In terms of biological role, g protein-coupled receptor activated by the neuropeptide pituitary adenylate cyclase-activating polypeptide (ADCYAP1/PACAP). Binds both PACAP27 and PACAP38 bioactive peptides. Ligand binding causes a conformation change that triggers signaling via guanine nucleotide-binding proteins (G proteins) and modulates the activity of downstream effectors. Activates cAMP-dependent pathway. May regulate the release of adrenocorticotropin, luteinizing hormone, growth hormone, prolactin, epinephrine, and catecholamine. May play a role in spermatogenesis and sperm motility. Causes smooth muscle relaxation and secretion in the gastrointestinal tract. The chain is Pituitary adenylate cyclase-activating polypeptide type I receptor from Rattus norvegicus (Rat).